A 310-amino-acid polypeptide reads, in one-letter code: Putative S-adenosyl-L-methionine-dependent methyltransferase MAB_4587c (310 aa).

S-adenosyl-L-methionine-binding positions include D126 and 155 to 156 (DL).

The protein belongs to the UPF0677 family.

Its function is as follows. Exhibits S-adenosyl-L-methionine-dependent methyltransferase activity. The polypeptide is Putative S-adenosyl-L-methionine-dependent methyltransferase MAB_4587c (Mycobacteroides abscessus (strain ATCC 19977 / DSM 44196 / CCUG 20993 / CIP 104536 / JCM 13569 / NCTC 13031 / TMC 1543 / L948) (Mycobacterium abscessus)).